The chain runs to 473 residues: BTB/POZ domain-containing protein KCTD8 (473 aa).

Residues 1–36 (MALKDTGSGGSTILPISEMVSSSSSPGASAAAAPGP) are disordered. A compositionally biased stretch (low complexity) spans 21–35 (SSSSSPGASAAAAPG). The BTB domain maps to 44–122 (EVVELNVGGQ…LRDKQLALPE (79 aa)). Ser78 is modified (phosphoserine). Arg80 carries the omega-N-methylarginine modification. The segment at 326 to 409 (IVSPKQEHED…WIPPPDKRRN (84 aa)) is disordered. Residues 330–346 (KQEHEDRKHDKVTDKGS) are compositionally biased toward basic and acidic residues. Residues 347-388 (ESGTSCNELSTSSCDSHSEASTPQDNPSSAQQATAHQPNTLT) show a composition bias toward polar residues. Ser410 carries the post-translational modification Phosphoserine.

Interacts as a tetramer with GABRB1 and GABRB2.

It is found in the presynaptic cell membrane. The protein localises to the postsynaptic cell membrane. Auxiliary subunit of GABA-B receptors that determine the pharmacology and kinetics of the receptor response. Increases agonist potency and markedly alter the G-protein signaling of the receptors by accelerating onset and promoting desensitization. This is BTB/POZ domain-containing protein KCTD8 (KCTD8) from Homo sapiens (Human).